The following is a 474-amino-acid chain: Dol-P-Glc:Glc(2)Man(9)GlcNAc(2)-PP-Dol alpha-1,2-glucosyltransferase (474 aa).

Residues 1 to 6 (MAQLEG) lie on the Cytoplasmic side of the membrane. A helical transmembrane segment spans residues 7–27 (YYFSAALSCTFLVSCLLFSAF). At 28-64 (SRALREPYMDEIFHLPQAQRYCEGRFSLSQWDPMITT) the chain is on the extracellular side. The helical transmembrane segment at 65–85 (LPGLYLVSVGVVKPASWILGW) threads the bilayer. The Cytoplasmic segment spans residues 86–97 (SEHVVCSIGMLR). A helical membrane pass occupies residues 98 to 118 (FVNLLFSVGNFYLLYLLFRKI). At 119 to 126 (QPRNKASS) the chain is on the extracellular side. The chain crosses the membrane as a helical span at residues 127 to 147 (SIQRILSTLTLAVFPTLYFFN). Residues 148-150 (FLY) lie on the Cytoplasmic side of the membrane. The helical transmembrane segment at 151–171 (YTEAGSVFFTLFAYLMCLYGN) threads the bilayer. At 172-175 (HRTS) the chain is on the extracellular side. Residues 176 to 196 (ALLGFCGFMFRQTNIIWAAFC) traverse the membrane as a helical segment. At 197–256 (AGHIIAQKCSEAWKTELQKKKEERLPPAKGPLSELRRVLQFLLMYSMSLKNLSMLFLLTW) the chain is on the cytoplasmic side. A helical transmembrane segment spans residues 257–277 (PYMLLLLAFFVFVVVNGGIVV). The Extracellular portion of the chain corresponds to 278–283 (GDRSSH). A helical transmembrane segment spans residues 284–304 (EACLHFPQLFYFFSFTAFFSF). At 305–317 (PHLLSPTKVKTFL) the chain is on the cytoplasmic side. A helical transmembrane segment spans residues 318 to 338 (SLVWKRRVQFSVITLVSVFLV). At 339–365 (WKFTYVHKYLLADNRHYTFYVWKRVFQ) the chain is on the extracellular side. The helical transmembrane segment at 366 to 386 (RHEIVKYLLVPAYMFAGWAVA) threads the bilayer. Topologically, residues 387–392 (DSLKSK) are cytoplasmic. A helical membrane pass occupies residues 393-413 (SIFWNLMFFVCLVASTVPQKL). Over 414 to 436 (LEFRYFILPYIIYRLNMPLPPIS) the chain is Extracellular. A helical membrane pass occupies residues 437-457 (RLVCELGCYAVVNFLTFYIFL). The Cytoplasmic segment spans residues 458-473 (NKTFQWSDSHDIQRFM).

The protein belongs to the ALG10 glucosyltransferase family. In terms of assembly, interacts with KCNH1; may regulate KCNH1, possibly by regulating its N-glycosylation. Interacts with KCNH2; may reduce KCNH2 sensitivity to classic proarrhythmic drug blockade, possibly by regulating its N-glycosylation. As to expression, highly expressed in brain, skeletal muscle, uterus, small intestine and liver. Moderately expressed in lung and kidney. Weakly expressed in heart and stomach.

Its subcellular location is the endoplasmic reticulum membrane. It catalyses the reaction an alpha-D-Glc-(1-&gt;3)-alpha-D-Glc-(1-&gt;3)-alpha-D-Man-(1-&gt;2)-alpha-D-Man-(1-&gt;2)-alpha-D-Man-(1-&gt;3)-[alpha-D-Man-(1-&gt;2)-alpha-D-Man-(1-&gt;3)-[alpha-D-Man-(1-&gt;2)-alpha-D-Man-(1-&gt;6)]-alpha-D-Man-(1-&gt;6)]-beta-D-Man-(1-&gt;4)-beta-D-GlcNAc-(1-&gt;4)-alpha-D-GlcNAc-diphospho-di-trans,poly-cis-dolichol + a di-trans,poly-cis-dolichyl beta-D-glucosyl phosphate = a alpha-D-Glc-(1-&gt;2)-alpha-D-Glc-(1-&gt;3)-alpha-D-Glc-(1-&gt;3)-alpha-D-Man-(1-&gt;2)-alpha-D-Man-(1-&gt;2)-alpha-D-Man-(1-&gt;3)-[alpha-D-Man-(1-&gt;2)-alpha-D-Man-(1-&gt;3)-[alpha-D-Man-(1-&gt;2)-alpha-D-Man-(1-&gt;6)]-alpha-D-Man-(1-&gt;6)]-beta-D-Man-(1-&gt;4)-beta-D-GlcNAc-(1-&gt;4)-alpha-D-GlcNAc-diphospho-di-trans,poly-cis-dolichol + a di-trans,poly-cis-dolichyl phosphate + H(+). Its pathway is protein modification; protein glycosylation. Dol-P-Glc:Glc(2)Man(9)GlcNAc(2)-PP-Dol alpha-1,2-glucosyltransferase that operates in the biosynthetic pathway of dolichol-linked oligosaccharides, the glycan precursors employed in protein asparagine (N)-glycosylation. The assembly of dolichol-linked oligosaccharides begins on the cytosolic side of the endoplasmic reticulum membrane and finishes in its lumen. The sequential addition of sugars to dolichol pyrophosphate produces dolichol-linked oligosaccharides containing fourteen sugars, including two GlcNAcs, nine mannoses and three glucoses. Once assembled, the oligosaccharide is transferred from the lipid to nascent proteins by oligosaccharyltransferases. In the lumen of the endoplasmic reticulum, adds the third and last glucose residue from dolichyl phosphate glucose (Dol-P-Glc) onto the lipid-linked oligosaccharide intermediate Glc(2)Man(9)GlcNAc(2)-PP-Dol to produce Glc(3)Man(9)GlcNAc(2)-PP-Dol. This Rattus norvegicus (Rat) protein is Dol-P-Glc:Glc(2)Man(9)GlcNAc(2)-PP-Dol alpha-1,2-glucosyltransferase.